Consider the following 62-residue polypeptide: uncharacterized protein (62 aa).

Residues Phe37 to Tyr57 traverse the membrane as a helical segment.

It is found in the membrane. This is an uncharacterized protein from Dictyostelium discoideum (Social amoeba).